The chain runs to 250 residues: MKNLILMIQFFTRIPINIEIDVKEDSFAKGISYLPLVGLIIGGFNAIVYFVSSKFILGTLPIVLALLANTIITGAFHIDGLADTCDGIFSSRKKERMLEIMKDSRVGTNGAIAIVFDFMLRYAVLNSLNKKYIIIALILSPVVAKTVVTLLMCFSVYARKEGGLGGVFVGKVKPFRVIVAFIISISIGYVLIGYKYVALLLITVLFIEIYKKLIYSKIDGMTGDTLGAANEIAEIIFMLALLSFKGCGLL.

6 consecutive transmembrane segments (helical) span residues 31-51 (ISYLPLVGLIIGGFNAIVYFV), 55-75 (FILGTLPIVLALLANTIITGA), 106-126 (VGTNGAIAIVFDFMLRYAVLN), 133-153 (IIIALILSPVVAKTVVTLLMC), 187-207 (IGYVLIGYKYVALLLITVLFI), and 230-250 (NEIAEIIFMLALLSFKGCGLL).

The protein belongs to the CobS family. Requires Mg(2+) as cofactor.

The protein resides in the cell membrane. It carries out the reaction alpha-ribazole + adenosylcob(III)inamide-GDP = adenosylcob(III)alamin + GMP + H(+). The catalysed reaction is alpha-ribazole 5'-phosphate + adenosylcob(III)inamide-GDP = adenosylcob(III)alamin 5'-phosphate + GMP + H(+). Its pathway is cofactor biosynthesis; adenosylcobalamin biosynthesis; adenosylcobalamin from cob(II)yrinate a,c-diamide: step 7/7. Functionally, joins adenosylcobinamide-GDP and alpha-ribazole to generate adenosylcobalamin (Ado-cobalamin). Also synthesizes adenosylcobalamin 5'-phosphate from adenosylcobinamide-GDP and alpha-ribazole 5'-phosphate. This chain is Adenosylcobinamide-GDP ribazoletransferase, found in Clostridium novyi (strain NT).